Reading from the N-terminus, the 629-residue chain is tRNA uridine 5-carboxymethylaminomethyl modification enzyme MnmG (629 aa).

13–18 (GGGHAG) is an FAD binding site. An NAD(+)-binding site is contributed by 273 to 287 (GPRYCPSIEDKVVRF).

The protein belongs to the MnmG family. In terms of assembly, homodimer. Heterotetramer of two MnmE and two MnmG subunits. It depends on FAD as a cofactor.

The protein resides in the cytoplasm. Functionally, NAD-binding protein involved in the addition of a carboxymethylaminomethyl (cmnm) group at the wobble position (U34) of certain tRNAs, forming tRNA-cmnm(5)s(2)U34. The chain is tRNA uridine 5-carboxymethylaminomethyl modification enzyme MnmG from Alkalilimnicola ehrlichii (strain ATCC BAA-1101 / DSM 17681 / MLHE-1).